We begin with the raw amino-acid sequence, 154 residues long: 6,7-dimethyl-8-ribityllumazine synthase (154 aa).

5-amino-6-(D-ribitylamino)uracil contacts are provided by residues F22, 56 to 58 (AFE), and 80 to 82 (TVI). 85-86 (AT) is a binding site for (2S)-2-hydroxy-3-oxobutyl phosphate. H88 serves as the catalytic Proton donor. F113 is a binding site for 5-amino-6-(D-ribitylamino)uracil. R127 is a (2S)-2-hydroxy-3-oxobutyl phosphate binding site.

This sequence belongs to the DMRL synthase family. As to quaternary structure, forms an icosahedral capsid composed of 60 subunits, arranged as a dodecamer of pentamers.

The catalysed reaction is (2S)-2-hydroxy-3-oxobutyl phosphate + 5-amino-6-(D-ribitylamino)uracil = 6,7-dimethyl-8-(1-D-ribityl)lumazine + phosphate + 2 H2O + H(+). Its pathway is cofactor biosynthesis; riboflavin biosynthesis; riboflavin from 2-hydroxy-3-oxobutyl phosphate and 5-amino-6-(D-ribitylamino)uracil: step 1/2. In terms of biological role, catalyzes the formation of 6,7-dimethyl-8-ribityllumazine by condensation of 5-amino-6-(D-ribitylamino)uracil with 3,4-dihydroxy-2-butanone 4-phosphate. This is the penultimate step in the biosynthesis of riboflavin. The sequence is that of 6,7-dimethyl-8-ribityllumazine synthase from Bacillus licheniformis (strain ATCC 14580 / DSM 13 / JCM 2505 / CCUG 7422 / NBRC 12200 / NCIMB 9375 / NCTC 10341 / NRRL NRS-1264 / Gibson 46).